The following is a 442-amino-acid chain: Galactose/N-acetylgalactosamine-binding lectin CEL-III (442 aa).

A propeptide spans 1–10 (MVSLVPCGFA) (removed in mature form). A Pyrrolidone carboxylic acid modification is found at glutamine 11. Residues 11-304 (QVLCTNPLDI…DWEVPTATWN (294 aa)) form a has hemagglutinating activity towards rabbit erythrocytes, but no hemolytic activity towards them region. 3 disulfides stabilise this stretch: cysteine 14/cysteine 59, cysteine 31/cysteine 48, and cysteine 72/cysteine 88. D-galactose-binding positions include aspartate 19 and 33 to 36 (DIVG). 2 Ricin B-type lectin domains span residues 28 to 102 (SKQC…RWRL) and 115 to 245 (EQVA…WSRP). Ca(2+) is bound by residues aspartate 33, isoleucine 34, and glycine 36. Positions 42 and 43 each coordinate Mg(2+). Position 49 (aspartate 49) interacts with D-galactose. Ca(2+) is bound at residue aspartate 53. Mg(2+) contacts are provided by asparagine 82 and valine 83. D-galactose is bound by residues valine 117 and 131 to 134 (DVEG). The cysteines at positions 129 and 146 are disulfide-linked. Ca(2+) contacts are provided by aspartate 131, valine 132, and glycine 134. Residue isoleucine 141 coordinates Mg(2+). 144–147 (YDCQ) contacts D-galactose. Aspartate 151, aspartate 178, valine 179, and glycine 181 together coordinate Ca(2+). A disulfide bridge links cysteine 176 with cysteine 193. 178–181 (DVEG) contributes to the D-galactose binding site. Mg(2+) contacts are provided by asparagine 187 and valine 188. D-galactose is bound at residue 191–194 (YSCE). Residues aspartate 198, aspartate 219, valine 220, and glycine 222 each coordinate Ca(2+). A disulfide bridge connects residues cysteine 217 and cysteine 234. 219 to 222 (DVEG) lines the D-galactose pocket. Positions 228 and 229 each coordinate Mg(2+). Residue 232-235 (YRCD) coordinates D-galactose. Aspartate 239 contributes to the Ca(2+) binding site. 2 cysteine pairs are disulfide-bonded: cysteine 249/cysteine 254 and cysteine 264/cysteine 281. The Ricin B-type lectin 3 domain occupies 261-293 (SNKCLDVSGDQGTGDVGTWQCDGLPDQRFKWVF). The Ca(2+) site is built by aspartate 266, valine 267, and glycine 269. A D-galactose-binding site is contributed by 266 to 269 (DVSG). Mg(2+)-binding residues include aspartate 275 and valine 276. D-galactose-binding positions include 279–282 (WQCD) and aspartate 286. Aspartate 286 contacts Ca(2+). The has a strong tendency to self-associate leading to formation of oligomers stretch occupies residues 294–442 (DDWEVPTATW…NEDCTFCTDI (149 aa)). Disulfide bonds link cysteine 308-cysteine 390, cysteine 377-cysteine 416, cysteine 425-cysteine 439, and cysteine 431-cysteine 436.

Oligomerizes in the human and rabbit erythrocyte membranes. Oligomerization is induced by binding of beta-1,4-linked disaccharide ligands such as lactose, lactulose, N-acetyllactosamine and phenyl-beta-D-galactoside, but only a little by N-acetylgalactosamine and galactose, and not at all by melibiose in aqueous solution in the presence of high salt concentration and pH 10. Forms heptamers that assemble into larger 21mer oligomers, which may be inserted as a transmembrane pore to the erythrocyte membrane. It depends on Ca(2+) as a cofactor. Mg(2+) serves as cofactor. In terms of tissue distribution, expressed in body fluid (at protein level).

Its subcellular location is the secreted. Its activity is regulated as follows. Ca(2+) is required for hemolytic activity and the activity increases with increasing calcium concentration. Hemolytic activity is inhibited by N-acetylgalactosamine (GalNAc), lactose, lactulose, galactosamine, dextran with molecular masses greater than 4 kDa, to a lesser extent by inulin and only slightly by sucrose and melezitose, but not by glucose or mannose. The activity is abolished in the presence of 10 mM EDTA. Lactose-binding increases with increasing calcium concentration, but calcium has no effect on hemagglutinating activity. Cytotoxic effect on Madin-Darby canine kidney (MDCK) cell line is strongly inhibited by galactose, lactose and N-acetylgalactosamine (GalNAc), but not by raffinose, N-acetylglucosamine (GlcNAc), glucose, mannose, ribose or sucrose. Pore formation in artificial lactosyl ceramide (LacCer) or globotetraosylceramide (Gb4Cer) containing liposomes is strongly inhibited by lactose. Its function is as follows. Galactose/N-acetylgalactosamine (Gal/GalNAc)-binding lectin with hemolytic activity. Favors saccharides that have a beta-1,4 linkage at the non-reducing end rather than saccharides having alpha-1,6 or alpha-1,4 linkages. Binds lactose, lactulose, GalNAc, galactosamine, methyl alpha-galactopyranoside, methyl beta-galactopyranoside, N-acetyllactosamine, p-nitrophenyl beta-D-galactopyranoside (pNP-Gal), p-nitrophenyl N-acetyl-beta-D-galactosaminide (pNP-GalNAc), asialofetuin, and human erythrocyte membrane lipids lactosyl ceramide (LacCer) and globoside globotetraosylceramide (Gb4Cer). Binds moderately to galactose, melibiose, raffinose, fucose, methyl alpha-galactoside and methyl beta-galactoside. Binds weakly to glucose, mannose and N-acetylglucosamine (GlcNAc). Has hemolytic activity towards human (A, B and O-type), rabbit and rat erythrocytes, but not towards mouse, chicken or horse erythrocytes. Forms ion-permeable transmembrane pores in the erythrocyte membrane as well as in artificial liposomes containing human erythrocyte membrane lipids LacCer, Gb4Cer and galactosyl ceramide (GalCer) leading to destruction of the membrane. Has hemagglutinating activity towards rabbit, human and rat erythrocytes, and at relatively high concentrations towards chicken and horse erythrocytes, but not towards mouse erythrocytes. Has dose-dependent cytotoxic effect on Madin-Darby canine kidney (MDCK), African green monkey kidney (Vero) and human epithelia carcinoma (HeLa) cell lines, but Chinese hamster ovary (CHO), rat sarcoma (XC) and potoroo rat kangaroo kidney (PtK1) cells are highly resistant to the cytotoxic effect of this protein. Impairs malaria parasite development in malaria parasite infected transgenic A.stephensi mosquitoes expressing this protein specifically in their midguts. Binds to ookinetes and leads to strong dose-dependent inhibition of ookinete formation in vitro. Leads to severely impaired oocyst formation and significantly reduced sporozoite production of rodent malaria parasite P.berghei in the salivary glands of the transgenic mosquitoes. The parasite transmission to uninfected mice (vectorial competence) of these mosquitoes is significantly impaired. Also leads to severely impaired oocyst formation of human malaria parasite P.falciparum in transgenic mosquitoes fed on mature P.falciparum gametocyte cultures. May be involved in defense mechanisms acting as a toxic protein to foreign microorganisms. May act in defense against predators. In Pseudocnus echinatus (Sea cucumber), this protein is Galactose/N-acetylgalactosamine-binding lectin CEL-III.